The following is a 127-amino-acid chain: Large ribosomal subunit protein uL22 (127 aa).

This sequence belongs to the universal ribosomal protein uL22 family. In terms of assembly, part of the 50S ribosomal subunit.

Functionally, this protein binds specifically to 23S rRNA; its binding is stimulated by other ribosomal proteins, e.g. L4, L17, and L20. It is important during the early stages of 50S assembly. It makes multiple contacts with different domains of the 23S rRNA in the assembled 50S subunit and ribosome. The globular domain of the protein is located near the polypeptide exit tunnel on the outside of the subunit, while an extended beta-hairpin is found that lines the wall of the exit tunnel in the center of the 70S ribosome. The chain is Large ribosomal subunit protein uL22 from Brucella suis (strain ATCC 23445 / NCTC 10510).